The primary structure comprises 335 residues: MEYFDIEEVSSKILHELLQYRRRFPESEHTIQYEENKVSEVQLPRIRAFVEQGKPIECILPAFPTKSPNPRKVLGKMPDMAEKLSLMFLNSLCQRIQLYYPPGAKIIICSDGHVFSDLIHVDDNTITDYQVEIEKLLHESGATHLSVFNLGNVESLTQYTDDYDQLRELLVKNYASSTEEIKAILKENEEGLLLYRAITRFLYEDSLLPEYTGSKNALQKDARQRSVGVIQRSWAWGNLLAEQFPQAIRLSIHPQSVESLKLGIHMMPTRDDWLTPWHGVAANINGQFVLMKSDEVKNLQGKLIHIRGVPSHYVIETESERNQEIEPIAEAVHAG.

It belongs to the isocyanide synthase family.

It catalyses the reaction D-ribulose 5-phosphate + L-tyrosine = (2S)-3-(4-hydroxyphenyl)-2-isocyanopropanoate + hydroxyacetone + formaldehyde + phosphate + H2O + H(+). Functionally, involved in the biosynthesis of rhabduscin, a tyrosine derivative which is a potent inhibitor of phenoloxidase, a key component of the insect's innate immune system. Responsible for the synthesis of the isonitrile group on tyrosine using the C2 of ribulose 5-phosphate as the source of the carbon atom. This Xenorhabdus nematophila (strain ATCC 19061 / DSM 3370 / CCUG 14189 / LMG 1036 / NCIMB 9965 / AN6) protein is L-tyrosine isonitrile synthase.